A 264-amino-acid chain; its full sequence is Pro-opiomelanocortin (264 aa).

The signal sequence occupies residues 1 to 26 (MPRSCCSRSGALLLALLLQASMEVRG). Position 87 is a phenylalanine amide (F87). 2 disordered regions span residues 88 to 204 (GRRN…DLEH) and 219 to 238 (RMEH…GGFM). N91 carries N-linked (GlcNAc...) asparagine glycosylation. Composition is skewed to basic and acidic residues over residues 99–122 (QKRE…EPRG) and 130–142 (REGK…EHFR). The residue at position 131 (E131) is a Glutamic acid 1-amide. S135 is subject to N-acetylserine; in Corticotropin. V147 carries the valine amide modification. The residue at position 165 (S165) is a Phosphoserine. Basic and acidic residues predominate over residues 172-186 (EFKRELTGQRPRAGD). Over residues 189–199 (DGPADDGAGPR) the composition is skewed to low complexity. Residues 219-234 (RMEHFRWGSPPKDKRY) show a composition bias toward basic and acidic residues.

Belongs to the POMC family. Specific enzymatic cleavages at paired basic residues yield the different active peptides. ACTH and MSH are produced by the pituitary gland.

The protein resides in the secreted. Functionally, stimulates the adrenal glands to release cortisol. Anorexigenic peptide. Increases the pigmentation of skin by increasing melanin production in melanocytes. In terms of biological role, increases the pigmentation of skin by increasing melanin production in melanocytes. Its function is as follows. Endogenous orexigenic opiate. Functionally, endogenous opiate. The protein is Pro-opiomelanocortin (POMC) of Macaca nemestrina (Pig-tailed macaque).